Consider the following 96-residue polypeptide: Integration host factor subunit alpha (96 aa).

Belongs to the bacterial histone-like protein family. Heterodimer of an alpha and a beta chain.

Its function is as follows. This protein is one of the two subunits of integration host factor, a specific DNA-binding protein that functions in genetic recombination as well as in transcriptional and translational control. The protein is Integration host factor subunit alpha of Haemophilus influenzae (strain 86-028NP).